Consider the following 371-residue polypeptide: 43 kDa relaxation protein (371 aa).

Disordered regions lie at residues 1–46 (MASY…GNMP), 150–172 (KEPDAVAQKRHVSGKHRPNAKNT), 196–221 (RVDSRSLKAQGIDREPERHLGAGQVQ), 263–291 (SERDTLTLKQELKSEPEQESHSGRTFDFE), and 328–371 (IHQE…SFSR). Residues 22–42 (YIAREGKYAREKDSDLEHKES) show a composition bias toward basic and acidic residues. The span at 157–168 (QKRHVSGKHRPN) shows a compositional bias: basic residues. Basic and acidic residues predominate over residues 196–215 (RVDSRSLKAQGIDREPERHL). Positions 330–365 (QEMERQRERERLAEKQRQQEKERQRLAEQIRQKPDK) are enriched in basic and acidic residues.

The protein belongs to the MobA/MobL family.

In terms of biological role, this protein is probably required for relaxation complex formation. The sequence is that of 43 kDa relaxation protein from Salmonella typhimurium.